The sequence spans 376 residues: Chaperone protein DnaJ (376 aa).

The J domain maps to 5–70; it reads DYYEVLGVGR…DKKAAYDQFG (66 aa). The CR-type zinc-finger motif lies at 132–210; that stretch reads GLTKELRIPT…CHGDGRVEKS (79 aa). 8 residues coordinate Zn(2+): cysteine 145, cysteine 148, cysteine 162, cysteine 165, cysteine 184, cysteine 187, cysteine 198, and cysteine 201. 4 CXXCXGXG motif repeats span residues 145 to 152, 162 to 169, 184 to 191, and 198 to 205; these read CDLCDGSG, CTTCHGQG, CPTCHGRG, and CSKCHGDG.

This sequence belongs to the DnaJ family. Homodimer. Requires Zn(2+) as cofactor.

Its subcellular location is the cytoplasm. Its function is as follows. Participates actively in the response to hyperosmotic and heat shock by preventing the aggregation of stress-denatured proteins and by disaggregating proteins, also in an autonomous, DnaK-independent fashion. Unfolded proteins bind initially to DnaJ; upon interaction with the DnaJ-bound protein, DnaK hydrolyzes its bound ATP, resulting in the formation of a stable complex. GrpE releases ADP from DnaK; ATP binding to DnaK triggers the release of the substrate protein, thus completing the reaction cycle. Several rounds of ATP-dependent interactions between DnaJ, DnaK and GrpE are required for fully efficient folding. Also involved, together with DnaK and GrpE, in the DNA replication of plasmids through activation of initiation proteins. The polypeptide is Chaperone protein DnaJ (Shewanella sp. (strain W3-18-1)).